The chain runs to 331 residues: Ketol-acid reductoisomerase (NADP(+)) (331 aa).

In terms of domain architecture, KARI N-terminal Rossmann spans 2 to 182; it reads ARMYYDEDAN…GGTRGGVLET (181 aa). Residues 25–28, Ser51, Ser53, and 83–86 each bind NADP(+); these read YGSQ and DEVQ. Residue His108 is part of the active site. Residue Gly134 participates in NADP(+) binding. Residues 183 to 328 form the KARI C-terminal knotted domain; it reads TFREETETDL…KDLRAMFSWL (146 aa). The Mg(2+) site is built by Asp191, Glu195, Glu227, and Glu231. Residue Ser252 coordinates substrate.

Belongs to the ketol-acid reductoisomerase family. It depends on Mg(2+) as a cofactor.

It carries out the reaction (2R)-2,3-dihydroxy-3-methylbutanoate + NADP(+) = (2S)-2-acetolactate + NADPH + H(+). The enzyme catalyses (2R,3R)-2,3-dihydroxy-3-methylpentanoate + NADP(+) = (S)-2-ethyl-2-hydroxy-3-oxobutanoate + NADPH + H(+). Its pathway is amino-acid biosynthesis; L-isoleucine biosynthesis; L-isoleucine from 2-oxobutanoate: step 2/4. It functions in the pathway amino-acid biosynthesis; L-valine biosynthesis; L-valine from pyruvate: step 2/4. Its function is as follows. Involved in the biosynthesis of branched-chain amino acids (BCAA). Catalyzes an alkyl-migration followed by a ketol-acid reduction of (S)-2-acetolactate (S2AL) to yield (R)-2,3-dihydroxy-isovalerate. In the isomerase reaction, S2AL is rearranged via a Mg-dependent methyl migration to produce 3-hydroxy-3-methyl-2-ketobutyrate (HMKB). In the reductase reaction, this 2-ketoacid undergoes a metal-dependent reduction by NADPH to yield (R)-2,3-dihydroxy-isovalerate. This chain is Ketol-acid reductoisomerase (NADP(+)), found in Trichormus variabilis (strain ATCC 29413 / PCC 7937) (Anabaena variabilis).